The primary structure comprises 158 residues: NADH-quinone oxidoreductase subunit B (158 aa).

Positions 37, 38, 102, and 132 each coordinate [4Fe-4S] cluster.

It belongs to the complex I 20 kDa subunit family. NDH-1 is composed of 14 different subunits. Subunits NuoB, C, D, E, F, and G constitute the peripheral sector of the complex. Requires [4Fe-4S] cluster as cofactor.

It is found in the cell inner membrane. It catalyses the reaction a quinone + NADH + 5 H(+)(in) = a quinol + NAD(+) + 4 H(+)(out). Its function is as follows. NDH-1 shuttles electrons from NADH, via FMN and iron-sulfur (Fe-S) centers, to quinones in the respiratory chain. Couples the redox reaction to proton translocation (for every two electrons transferred, four hydrogen ions are translocated across the cytoplasmic membrane), and thus conserves the redox energy in a proton gradient. This is NADH-quinone oxidoreductase subunit B from Legionella pneumophila (strain Paris).